A 97-amino-acid polypeptide reads, in one-letter code: Sperm-associated acrosin inhibitor (97 aa).

An N-terminal signal peptide occupies residues 1-26; that stretch reads MAFFSSRVRALFILVLVLPLCSETGF. The 59-residue stretch at 32-90 folds into the Kazal-like domain; that stretch reads TRKEPDCDVYRSHLFFCTREMDPICGTNGKSYANPCIFCSEKLGRNEKFDFGHWGHCRE. Cystine bridges form between C38–C70, C48–C67, and C56–C88.

As to expression, seminal plasma.

The protein localises to the secreted. Its function is as follows. Inhibits acrosin. This Sus scrofa (Pig) protein is Sperm-associated acrosin inhibitor.